The chain runs to 408 residues: Snake venom 5'-nucleotidase (408 aa).

2 residues coordinate Zn(2+): His-54 and His-77. N-linked (GlcNAc...) asparagine glycans are attached at residues Asn-167 and Asn-181. Cystine bridges form between Cys-187–Cys-192 and Cys-199–Cys-221. Residue Arg-188 coordinates AMP. Positions 224, 229, and 252 each coordinate AMP. Cys-311 and Cys-314 form a disulfide bridge. The AMP site is built by Phe-335 and Asp-341. 2 consecutive propeptides (removed in mature form) follow at residues 385 to 388 (DGTL) and 385 to 408 (DGTL…FFIL).

Belongs to the 5'-nucleotidase family. Homodimer. Post-translationally, venom 5'-nucleotidases (or a part thereof) may be released into the venom via exosome-like vesicles. They may be attached via a GPI anchor to the membrane of these vesicles. Soluble forms of 5'-nucleotidase might be released by cleavage of the ectodomain in the exosome-like vesicles or venom gland cells. Expressed by the venom gland.

It is found in the membrane. It carries out the reaction a ribonucleoside 5'-phosphate + H2O = a ribonucleoside + phosphate. It catalyses the reaction AMP + H2O = adenosine + phosphate. The enzyme catalyses GMP + H2O = guanosine + phosphate. The catalysed reaction is ADP + H2O = AMP + phosphate + H(+). Its activity is regulated as follows. Is potently inhibited by metal ions Fe(3+), Cu(2+) and Zn(2+). Is enhanced by Mn(2+). Ca(2+) and Mg(2+) have no effect. Functionally, hydrolyzes nucleotides into nucleosides. Prefers AMP as the substrate but also cleaves GMP and ADP. Does not affect AMP, cAMP and cGMP. Inhibits ADP- and collagen-induced platelet aggregation. Snake venom 5'-nucleotidases are widely distributed among venomous snake taxa, but there is a lack of information about their biological activities. They have been shown to inhibit platelet aggregation. This effect may be due to the liberation of inhibitory AMP or adenosine by its action on ADP released upon initiation of aggregation. Venom 5'-nucleotidases are also known to synergistically act in vivo with other toxins like ADPases, phospholipases, and disintegrins to exert a more pronounced anti-coagulant effect. The protein is Snake venom 5'-nucleotidase of Macrovipera lebetinus (Levantine viper).